A 501-amino-acid chain; its full sequence is Betaine aldehyde dehydrogenase, chloroplastic (501 aa).

The transit peptide at 1-7 (MAIRVPS) directs the protein to the chloroplast. NAD(+) is bound at residue 238 to 243 (GSTATG). The Proton acceptor role is filled by E260. C294 serves as the catalytic Nucleophile.

The protein belongs to the aldehyde dehydrogenase family. As to quaternary structure, homodimer.

The protein localises to the plastid. The protein resides in the chloroplast. It catalyses the reaction betaine aldehyde + NAD(+) + H2O = glycine betaine + NADH + 2 H(+). The protein operates within amine and polyamine biosynthesis; betaine biosynthesis via choline pathway; betaine from betaine aldehyde: step 1/1. The sequence is that of Betaine aldehyde dehydrogenase, chloroplastic (BADH4) from Amaranthus hypochondriacus (Prince-of-Wales feather).